We begin with the raw amino-acid sequence, 327 residues long: Beta-1,4-galactosyltransferase 7 (327 aa).

Over 1–30 (MFPSRRKAAQLPWEDGRSGLLSGGLPRKCS) the chain is Cytoplasmic. The chain crosses the membrane as a helical; Signal-anchor for type II membrane protein span at residues 31 to 51 (VFHLFVACLSLGFFSLLWLQL). Topologically, residues 52–327 (SCSGDVARAV…KTATPWCTFS (276 aa)) are lumenal. Positions 63–87 (GQGQETSGPPRACPPEPPPEHWEED) are disordered. Residues 100–104 (PFRER) and 139–141 (FNR) contribute to the UDP-alpha-D-galactose site. N-linked (GlcNAc...) asparagine glycosylation occurs at N154. UDP-alpha-D-galactose contacts are provided by residues 164–165 (VD), Y194, and W224. D165 lines the Mn(2+) pocket. 226-229 (REDD) is a binding site for N-acetyl-D-glucosamine. Mn(2+) is bound at residue H257. UDP-alpha-D-galactose contacts are provided by residues 257-259 (HLH) and R266. A disulfide bond links C316 and C324.

It belongs to the glycosyltransferase 7 family. Mn(2+) serves as cofactor. As to expression, high expression in heart, pancreas and liver, medium in placenta and kidney, low in brain, skeletal muscle and lung.

It is found in the golgi apparatus. The protein resides in the golgi stack membrane. The enzyme catalyses 3-O-(beta-D-xylosyl)-L-seryl-[protein] + UDP-alpha-D-galactose = 3-O-(beta-D-galactosyl-(1-&gt;4)-beta-D-xylosyl)-L-seryl-[protein] + UDP + H(+). The protein operates within protein modification; protein glycosylation. Functionally, required for the biosynthesis of the tetrasaccharide linkage region of proteoglycans, especially for small proteoglycans in skin fibroblasts. This is Beta-1,4-galactosyltransferase 7 (B4GALT7) from Homo sapiens (Human).